The primary structure comprises 527 residues: Lysine--tRNA ligase (527 aa).

The Mg(2+) site is built by Glu431 and Glu438.

Belongs to the class-II aminoacyl-tRNA synthetase family. As to quaternary structure, homodimer. Mg(2+) serves as cofactor.

It is found in the cytoplasm. It carries out the reaction tRNA(Lys) + L-lysine + ATP = L-lysyl-tRNA(Lys) + AMP + diphosphate. The protein is Lysine--tRNA ligase (lysS) of Chlamydia pneumoniae (Chlamydophila pneumoniae).